Here is a 688-residue protein sequence, read N- to C-terminus: PHD finger protein 21A (688 aa).

Residue lysine 65 forms a Glycyl lysine isopeptide (Lys-Gly) (interchain with G-Cter in SUMO2) linkage. 2 disordered regions span residues 78 to 127 (SQSE…LTAS) and 327 to 373 (PQTV…ENPQ). The span at 85-127 (QTAQQQPLQPLQQQQPQQPQQQQQQQQQHAQQSAAAPPSLTAS) shows a compositional bias: low complexity. Residues 336 to 354 (SLEKQTVKSHPEAEEKQAE) show a composition bias toward basic and acidic residues. A DNA-binding region (a.T hook) is located at residues 434 to 446 (TRKRGRPPKYNAV). Positions 449–471 (FGALTPTSPPSSHPDSPENEKTE) are disordered. Position 453 is a phosphothreonine (threonine 453). Phosphoserine is present on serine 456. The PHD-type zinc-finger motif lies at 497 to 544 (EDFCSVCRKSGQLLMCDTCSRVYHLDCLEPPLKTIPKGMWICPRCQDQ). Positions 571-609 (KEEEKQKLLKWSSDLKQEREQLEQKVKELSSSISKCMEM) form a coiled coil. The interval 650-688 (GALSNGPDCTPPANAASTPAPSPSSQSCTANCNQGEETK) is disordered. Residues 660-679 (PPANAASTPAPSPSSQSCTA) show a composition bias toward low complexity.

In terms of assembly, component of a BHC histone deacetylase complex that contains HDAC1, HDAC2, HMG20B/BRAF35, KDM1A, RCOR1/CoREST and PHF21A/BHC80. The BHC complex may also contain ZMYM2, ZNF217, ZMYM3, GSE1 and GTF2I. In the complex, it interacts directly with HDAC1, HDAC2, HMG20B/BRAF35, KDM1A and RCOR1/CoREST. In terms of tissue distribution, expressed in the brain and testis. Weakly or not expressed in other tissues tested. Localized throughout the central nervous system (CNS) in brain, including the cerebellum, hippocampus, and cortex. Notably present in neuronal cells of granular cell layer and dentate gyrus in cerebellum and hippocampus, respectively. In the seminiferous tubules, the signals it is present strongly in spermatocytes, and weakly in spermatogonia and round spermatids. In some cases, it is also observed solely in spermatocytes (at protein level).

The protein localises to the nucleus. Its function is as follows. Component of the BHC complex, a corepressor complex that represses transcription of neuron-specific genes in non-neuronal cells. The BHC complex is recruited at RE1/NRSE sites by REST and acts by deacetylating and demethylating specific sites on histones, thereby acting as a chromatin modifier. In the BHC complex, it may act as a scaffold. Inhibits KDM1A-mediated demethylation of 'Lys-4' of histone H3 in vitro, suggesting a role in demethylation regulation. The chain is PHD finger protein 21A from Mus musculus (Mouse).